Reading from the N-terminus, the 346-residue chain is Ribosomal RNA small subunit methyltransferase H (346 aa).

Residues 46-48 (GGY), Asp-63, Phe-90, Asp-113, and Gln-120 contribute to the S-adenosyl-L-methionine site. The disordered stretch occupies residues 270 to 327 (GGSAGSRHMPETHMRLPSFTPAVKGAVGPTPEEEERNPRARSAKLRAGIRTENSPLED).

The protein belongs to the methyltransferase superfamily. RsmH family.

The protein localises to the cytoplasm. It catalyses the reaction cytidine(1402) in 16S rRNA + S-adenosyl-L-methionine = N(4)-methylcytidine(1402) in 16S rRNA + S-adenosyl-L-homocysteine + H(+). Its function is as follows. Specifically methylates the N4 position of cytidine in position 1402 (C1402) of 16S rRNA. The chain is Ribosomal RNA small subunit methyltransferase H from Brucella ovis (strain ATCC 25840 / 63/290 / NCTC 10512).